Reading from the N-terminus, the 1090-residue chain is DNA damage-binding protein 1 (1090 aa).

The protein belongs to the DDB1 family. In terms of assembly, component of the UV-DDB complex, which is composed of DDB1 and DDB2. In terms of tissue distribution, expressed in proliferating tissues. Highly expressed in shoot apical meristem (SAM). Expressed in roots, young leaves, flag leaves, and panicles. Not detected in mature leaves.

The protein resides in the nucleus. Its function is as follows. Required for DNA repair. Binds to DDB2 to form the UV-damaged DNA-binding protein complex (the UV-DDB complex). The UV-DDB complex may recognize UV-induced DNA damage and recruit proteins of the nucleotide excision repair pathway (the NER pathway) to initiate DNA repair. May function as the substrate recognition module for a DCX (DDB1-CUL4-X-box) E3 ubiquitin-protein ligase complex. The chain is DNA damage-binding protein 1 from Oryza sativa subsp. japonica (Rice).